A 78-amino-acid chain; its full sequence is UPF0349 protein Sca_0544 (78 aa).

It belongs to the UPF0349 family.

This Staphylococcus carnosus (strain TM300) protein is UPF0349 protein Sca_0544.